The chain runs to 125 residues: uncharacterized protein (125 aa).

Belongs to the asfivirus B125R family.

This is an uncharacterized protein from African swine fever virus (isolate Pig/Kenya/KEN-50/1950) (ASFV).